The primary structure comprises 61 residues: Large ribosomal subunit protein uL30 (61 aa).

It belongs to the universal ribosomal protein uL30 family. In terms of assembly, part of the 50S ribosomal subunit.

The sequence is that of Large ribosomal subunit protein uL30 from Chlorobium luteolum (strain DSM 273 / BCRC 81028 / 2530) (Pelodictyon luteolum).